Here is a 262-residue protein sequence, read N- to C-terminus: Small ribosomal subunit protein eS4y (262 aa).

Positions 42–104 (LPLVLIIRNR…TNENFRLLYD (63 aa)) constitute an S4 RNA-binding domain.

It belongs to the eukaryotic ribosomal protein eS4 family.

It localises to the cytoplasm. The protein is Small ribosomal subunit protein eS4y (RPS4B) of Arabidopsis thaliana (Mouse-ear cress).